The primary structure comprises 323 residues: o-succinylbenzoate synthase (323 aa).

Lysine 134 serves as the catalytic Proton donor. Mg(2+) contacts are provided by aspartate 162, glutamate 191, and aspartate 214. The active-site Proton acceptor is the lysine 236.

This sequence belongs to the mandelate racemase/muconate lactonizing enzyme family. MenC type 1 subfamily. A divalent metal cation is required as a cofactor.

It carries out the reaction (1R,6R)-6-hydroxy-2-succinyl-cyclohexa-2,4-diene-1-carboxylate = 2-succinylbenzoate + H2O. The protein operates within quinol/quinone metabolism; 1,4-dihydroxy-2-naphthoate biosynthesis; 1,4-dihydroxy-2-naphthoate from chorismate: step 4/7. It participates in quinol/quinone metabolism; menaquinone biosynthesis. Functionally, converts 2-succinyl-6-hydroxy-2,4-cyclohexadiene-1-carboxylate (SHCHC) to 2-succinylbenzoate (OSB). The chain is o-succinylbenzoate synthase from Yersinia pseudotuberculosis serotype IB (strain PB1/+).